The following is a 624-amino-acid chain: Probable potassium transport system protein Kup 2 (624 aa).

The next 12 helical transmembrane spans lie at 14–34 (LSFAALGVVFGDIGTSPLYAF), 51–71 (ILSLIFWSLIIIVSIKYLVIV), 97–117 (GGWLLFITLVGIGLIIGDGML), 133–153 (LSPNLAKYVLPVTLIILFFLF), 163–183 (IGVYFAPVMLVWFITIGILGF), 211–231 (SALFILGGVFLVMTGGEALFA), 245–265 (WFAVALPALLLCYFGQGAFVL), 283–303 (FLPVMIILATLATIIASQAII), 335–355 (VYLPLINFILALGTCSLVVIF), 364–384 (AYGIAVNLDMLITTVLVGIIA), 393–413 (FKILIFLLILIIELAFFAGNI), and 416–436 (LLTGGWIPVLIAFLGFVVMYT).

Belongs to the HAK/KUP transporter (TC 2.A.72) family.

The protein resides in the cell inner membrane. It carries out the reaction K(+)(in) + H(+)(in) = K(+)(out) + H(+)(out). Transport of potassium into the cell. Likely operates as a K(+):H(+) symporter. The polypeptide is Probable potassium transport system protein Kup 2 (Legionella pneumophila (strain Lens)).